Reading from the N-terminus, the 349-residue chain is Holliday junction branch migration complex subunit RuvB (349 aa).

The large ATPase domain (RuvB-L) stretch occupies residues 1 to 181; sequence MDDRILTSVN…FGVLCPMEFY (181 aa). Residues Leu-20, Arg-21, Gly-62, Lys-65, Thr-66, Thr-67, 128 to 130, Arg-171, Tyr-181, and Arg-218 contribute to the ATP site; that span reads EDY. Residue Thr-66 participates in Mg(2+) binding. Positions 182 to 252 are small ATPAse domain (RuvB-S); that stretch reads NDEELKEIIV…SAKKALNLLE (71 aa). The tract at residues 255–349 is head domain (RuvB-H); the sequence is DEGFDSIDNK…DQCSFFKKEK (95 aa). DNA contacts are provided by Arg-310 and Arg-315.

The protein belongs to the RuvB family. As to quaternary structure, homohexamer. Forms an RuvA(8)-RuvB(12)-Holliday junction (HJ) complex. HJ DNA is sandwiched between 2 RuvA tetramers; dsDNA enters through RuvA and exits via RuvB. An RuvB hexamer assembles on each DNA strand where it exits the tetramer. Each RuvB hexamer is contacted by two RuvA subunits (via domain III) on 2 adjacent RuvB subunits; this complex drives branch migration. In the full resolvosome a probable DNA-RuvA(4)-RuvB(12)-RuvC(2) complex forms which resolves the HJ.

The protein localises to the cytoplasm. It carries out the reaction ATP + H2O = ADP + phosphate + H(+). Functionally, the RuvA-RuvB-RuvC complex processes Holliday junction (HJ) DNA during genetic recombination and DNA repair, while the RuvA-RuvB complex plays an important role in the rescue of blocked DNA replication forks via replication fork reversal (RFR). RuvA specifically binds to HJ cruciform DNA, conferring on it an open structure. The RuvB hexamer acts as an ATP-dependent pump, pulling dsDNA into and through the RuvAB complex. RuvB forms 2 homohexamers on either side of HJ DNA bound by 1 or 2 RuvA tetramers; 4 subunits per hexamer contact DNA at a time. Coordinated motions by a converter formed by DNA-disengaged RuvB subunits stimulates ATP hydrolysis and nucleotide exchange. Immobilization of the converter enables RuvB to convert the ATP-contained energy into a lever motion, pulling 2 nucleotides of DNA out of the RuvA tetramer per ATP hydrolyzed, thus driving DNA branch migration. The RuvB motors rotate together with the DNA substrate, which together with the progressing nucleotide cycle form the mechanistic basis for DNA recombination by continuous HJ branch migration. Branch migration allows RuvC to scan DNA until it finds its consensus sequence, where it cleaves and resolves cruciform DNA. The sequence is that of Holliday junction branch migration complex subunit RuvB from Clostridium acetobutylicum (strain ATCC 824 / DSM 792 / JCM 1419 / IAM 19013 / LMG 5710 / NBRC 13948 / NRRL B-527 / VKM B-1787 / 2291 / W).